A 231-amino-acid polypeptide reads, in one-letter code: Phosphoglycolate phosphatase (231 aa).

Asp9 functions as the Nucleophile in the catalytic mechanism. Mg(2+) contacts are provided by Asp9 and Asp11. The active-site Proton donor is Asp11. Residue Lys154 coordinates substrate. Mg(2+)-binding residues include Asp177 and Asp181.

This sequence belongs to the archaeal SPP-like hydrolase family. In terms of assembly, homodimer. Requires Mg(2+) as cofactor.

It catalyses the reaction 2-phosphoglycolate + H2O = glycolate + phosphate. In terms of biological role, catalyzes the dephosphorylation of 2-phosphoglycolate. Has phosphatase activity towards p-nitrophenylphosphate (in vitro). This is Phosphoglycolate phosphatase from Pyrococcus horikoshii (strain ATCC 700860 / DSM 12428 / JCM 9974 / NBRC 100139 / OT-3).